A 94-amino-acid chain; its full sequence is Co-chaperonin GroES (94 aa).

Belongs to the GroES chaperonin family. In terms of assembly, heptamer of 7 subunits arranged in a ring. Interacts with the chaperonin GroEL.

The protein resides in the cytoplasm. Its function is as follows. Together with the chaperonin GroEL, plays an essential role in assisting protein folding. The GroEL-GroES system forms a nano-cage that allows encapsulation of the non-native substrate proteins and provides a physical environment optimized to promote and accelerate protein folding. GroES binds to the apical surface of the GroEL ring, thereby capping the opening of the GroEL channel. In Streptococcus pneumoniae (strain 70585), this protein is Co-chaperonin GroES.